A 342-amino-acid polypeptide reads, in one-letter code: tRNA dimethylallyltransferase (342 aa).

39–46 (GPTGSGKT) is an ATP binding site. Residue 41–46 (TGSGKT) coordinates substrate. The tract at residues 64–67 (DSMQ) is interaction with substrate tRNA.

This sequence belongs to the IPP transferase family. In terms of assembly, monomer. Mg(2+) serves as cofactor.

The enzyme catalyses adenosine(37) in tRNA + dimethylallyl diphosphate = N(6)-dimethylallyladenosine(37) in tRNA + diphosphate. In terms of biological role, catalyzes the transfer of a dimethylallyl group onto the adenine at position 37 in tRNAs that read codons beginning with uridine, leading to the formation of N6-(dimethylallyl)adenosine (i(6)A). The sequence is that of tRNA dimethylallyltransferase from Chlamydia caviae (strain ATCC VR-813 / DSM 19441 / 03DC25 / GPIC) (Chlamydophila caviae).